The sequence spans 136 residues: Large-conductance mechanosensitive channel (136 aa).

A run of 2 helical transmembrane segments spans residues 10-30 and 76-96; these read FAMRGNVVDLAVGVIIGAAFG and GVFIQNVFDFLIVAFAIFMAI.

It belongs to the MscL family. In terms of assembly, homopentamer.

The protein localises to the cell inner membrane. Channel that opens in response to stretch forces in the membrane lipid bilayer. May participate in the regulation of osmotic pressure changes within the cell. This Escherichia coli O139:H28 (strain E24377A / ETEC) protein is Large-conductance mechanosensitive channel.